The chain runs to 159 residues: Histone H1 (159 aa).

Disordered stretches follow at residues 1–31, 80–99, and 132–159; these read MAEKESSKKVTTKKPAATHRRRDGCNSITEL, KGAECAGGQGTGVGEGKKEK, and AAKKVKAAPKKAKKPVKKTTEKKEKKKS. The segment covering 10 to 22 has biased composition (basic residues); that stretch reads VTTKKPAATHRRR. The 91-residue stretch at 12–102 folds into the H15 domain; sequence TKKPAATHRR…GEGKKEKEKA (91 aa). Residues 84–93 are compositionally biased toward gly residues; the sequence is CAGGQGTGVG. A compositionally biased stretch (basic residues) spans 134-148; sequence KKVKAAPKKAKKPVK. Residues 149-159 are compositionally biased toward basic and acidic residues; that stretch reads KTTEKKEKKKS.

This sequence belongs to the histone H1/H5 family.

Its subcellular location is the nucleus. The protein localises to the chromosome. Histones H1 are necessary for the condensation of nucleosome chains into higher-order structures. The polypeptide is Histone H1 (Psammechinus miliaris (Green sea urchin)).